A 91-amino-acid chain; its full sequence is Large ribosomal subunit protein bL31B (91 aa).

The protein belongs to the bacterial ribosomal protein bL31 family. Type B subfamily. In terms of assembly, part of the 50S ribosomal subunit.

The chain is Large ribosomal subunit protein bL31B from Mycolicibacterium vanbaalenii (strain DSM 7251 / JCM 13017 / BCRC 16820 / KCTC 9966 / NRRL B-24157 / PYR-1) (Mycobacterium vanbaalenii).